The sequence spans 511 residues: MLSTMDTVAALAAVFVAGTLLSRLASWIRYHFKIRKIPLAHNLGLLDRIFTRKATEEFAVDFKNLSRKGLAKDKNAFRVQTDFGEMVILGGHYAEEMKGDNGLSTGDYTKMELMGDIPGFEPFSFAGDHRELMHTVITKRLNRALPRLAIEQSVEVADFLSHNWTDSNEWHSIPLYQMLMGLVARASVSAFLGPELARNERWIELNAQYTVVGIGAVHALRPWPRFLLPLVHHFHPKAKAVRAILSECRQIMEPILRRRAQAKQGIQIKSAVSDTALDWFEEVAASIGQSYDPTVAQLTFAVAAMHSTTDHLCQILIDLRDKTEVVAAARSELVDVVTREGWNQTALSQLKLMESIMKESQRMKPINRVINKRIVTEDLHLSNDVFLPKGSFVAVSGERMHNPSIYEDPEQYDAYRFIKKAEEGPESARFSGYTSITTDSVGFGYGKHSCPGRSYVSQEMKVILSHILLKYDFRFPEGYQPKGVNNGFDSITDIMASCMIRRRAEEVKLPG.

The chain crosses the membrane as a helical span at residues 7-29 (TVAALAAVFVAGTLLSRLASWIR). Residues N64, N163, and N343 are each glycosylated (N-linked (GlcNAc...) asparagine). C450 contributes to the heme binding site.

This sequence belongs to the cytochrome P450 family. It depends on heme as a cofactor.

The protein localises to the membrane. The protein operates within mycotoxin biosynthesis. Cytochrome P450 monooxygenase; part of the 2 gene clusters that mediate the biosynthesis of fusicoccins, diterpene glucosides that display phytohormone-like activity and function as potent activators of plasma membrane H(+)-ATPases in plants by modifying 14-3-3 proteins and cause the plant disease constriction canker. The first step in the pathway is performed by the fusicoccadiene synthase PaFS that possesses both prenyl transferase and terpene cyclase activity, converting isopentenyl diphosphate and dimethylallyl diphosphate into geranylgeranyl diphosphate (GGDP) and successively converting GGDP into fusicocca-2,10(14)-diene, a precursor for fusicoccin H. The second step is the oxidation at the C-8 position by the cytochrome P450 monooxygenase PaP450-2 to yield fusicocca-2,10(14)-diene-8-beta-ol. The cytochrome P450 monooxygenase PaP450-1 then catalyzes the hydroxylation at the C-16 position to produce fusicocca-2,10(14)-diene-8-beta,16-diol. The dioxygenase fc-dox then catalyzes the 16-oxydation of fusicocca-2,10(14)-diene-8-beta,16-diol to yield an aldehyde (8-beta-hydroxyfusicocca-1,10(14)-dien-16-al). The short-chain dehydrogenase/reductase fc-sdr catalyzes the reduction of the aldehyde to yield fusicocca-1,10(14)-diene-8-beta,16-diol. The next step is the hydroxylation at C-9 performed by the cytochrome P450 monooxygenase PaP450-3 that leads to fusicoccin H aglycon which is glycosylated to fusicoccin H by the O-glycosyltransferase PaGT. Hydroxylation at C-12 by the cytochrome P450 monooxygenase PaP450-4 leads then to the production of fusicoccin Q and is followed by methylation by the O-methyltransferase PaMT to yield fusicoccin P. Fusicoccin P is further converted to fusicoccin J via prenylation by the O-glucose prenyltransferase PaPT. Cytochrome P450 monooxygenase PaP450-5 then performs hydroxylation at C-19 to yield dideacetyl-fusicoccin A which is acetylated to 3'-O-deacetyl-fusicoccin A by the O-acetyltransferase PaAT-2. Finally, a another acetylation by the O-acetyltransferase PaAT-1 yields fusicoccin A. In Phomopsis amygdali (Fusicoccum amygdali), this protein is Fusicocca-1,10(14)-diene-8beta,16-diol C-9 hydroxylase.